Consider the following 185-residue polypeptide: Intraflagellar transport protein 22 homolog (185 aa).

Residues 10-17 (GPCESGKT), 63-67 (DCGGD), and 123-126 (HKPG) each bind GTP.

It belongs to the small GTPase superfamily. Rab family. In terms of assembly, component of the IFT complex B, at least composed of IFT20, IFT22, IFT25, IFT27, IFT46, IFT52, TRAF3IP1/IFT54, IFT57, IFT74, IFT80, IFT81, and IFT88. Interacts with IFT88. Interacts with CFAP61.

The protein localises to the cell projection. Its subcellular location is the cilium. In terms of biological role, small GTPase-like component of the intraflagellar transport (IFT) complex B. The chain is Intraflagellar transport protein 22 homolog (IFT22) from Bos taurus (Bovine).